A 316-amino-acid chain; its full sequence is tRNA dimethylallyltransferase (316 aa).

9-16 (GPTASGKS) contacts ATP. Position 11 to 16 (11 to 16 (TASGKS)) interacts with substrate. Interaction with substrate tRNA regions lie at residues 34–37 (DSMQ) and 158–162 (QRLAR).

It belongs to the IPP transferase family. Monomer. Mg(2+) is required as a cofactor.

It carries out the reaction adenosine(37) in tRNA + dimethylallyl diphosphate = N(6)-dimethylallyladenosine(37) in tRNA + diphosphate. Its function is as follows. Catalyzes the transfer of a dimethylallyl group onto the adenine at position 37 in tRNAs that read codons beginning with uridine, leading to the formation of N6-(dimethylallyl)adenosine (i(6)A). The polypeptide is tRNA dimethylallyltransferase (Hyphomonas neptunium (strain ATCC 15444)).